The sequence spans 193 residues: Segregation and condensation protein B (193 aa).

The protein belongs to the ScpB family. Homodimer. Homodimerization may be required to stabilize the binding of ScpA to the Smc head domains. Component of a cohesin-like complex composed of ScpA, ScpB and the Smc homodimer, in which ScpA and ScpB bind to the head domain of Smc. The presence of the three proteins is required for the association of the complex with DNA.

Its subcellular location is the cytoplasm. Participates in chromosomal partition during cell division. May act via the formation of a condensin-like complex containing Smc and ScpA that pull DNA away from mid-cell into both cell halves. This is Segregation and condensation protein B from Shouchella clausii (strain KSM-K16) (Alkalihalobacillus clausii).